The following is a 574-amino-acid chain: Calcium-dependent protein kinase 9 (574 aa).

Positions 1–64 (MGNTCCVAPA…RARAKPNPYD (64 aa)) are disordered. The N-myristoyl glycine moiety is linked to residue G2. Residues 28 to 40 (KSPAPSATTTTAT) are compositionally biased toward low complexity. Residues 101-359 (YQLGRELGRG…AQQVLDHPWL (259 aa)) form the Protein kinase domain. Residues 107 to 115 (LGRGEFGVT) and K130 each bind ATP. D225 serves as the catalytic Proton acceptor. An autoinhibitory domain region spans residues 365 to 395 (APNVPLGDVVRARLKQFSLMNRLKKKAMRVI). EF-hand domains follow at residues 402–437 (EEVE…VGSK), 438–473 (LAEP…LQRL), 474–509 (SNDN…DSGH), and 510–545 (ADDA…GTDW). Ca(2+) contacts are provided by D415, D417, N419, R421, E426, D451, D453, N455, Y457, E462, D487, D489, S491, Y493, E498, D523, D525, D527, R529, and E534.

The protein belongs to the protein kinase superfamily. Ser/Thr protein kinase family. CDPK subfamily. As to expression, expressed in leaf blades and stems. Expressed at low levels in anthers and spikelets.

The protein resides in the membrane. It catalyses the reaction L-seryl-[protein] + ATP = O-phospho-L-seryl-[protein] + ADP + H(+). The catalysed reaction is L-threonyl-[protein] + ATP = O-phospho-L-threonyl-[protein] + ADP + H(+). With respect to regulation, activated by calcium. Autophosphorylation may play an important role in the regulation of the kinase activity. Functionally, may play a role in signal transduction pathways that involve calcium as a second messenger. Functions in signal transduction pathways that positively regulate responses to drought, osmotic, and dehydration stress. Regulates expression of stress-associated genes in response to drought. Involved in tolerance to drought stress by increasing proline and soluble sugars, and improving stomatal closure. Required for pollen maturation and spikelet fertility. The chain is Calcium-dependent protein kinase 9 from Oryza sativa subsp. japonica (Rice).